The following is a 588-amino-acid chain: DNA ligase (588 aa).

Glu-248 contacts ATP. Lys-250 (N6-AMP-lysine intermediate) is an active-site residue. Residues Arg-255, Arg-270, Glu-300, Phe-341, Arg-418, and Lys-424 each contribute to the ATP site.

It belongs to the ATP-dependent DNA ligase family. Mg(2+) serves as cofactor.

The catalysed reaction is ATP + (deoxyribonucleotide)n-3'-hydroxyl + 5'-phospho-(deoxyribonucleotide)m = (deoxyribonucleotide)n+m + AMP + diphosphate.. Functionally, DNA ligase that seals nicks in double-stranded DNA during DNA replication, DNA recombination and DNA repair. This Thermoplasma volcanium (strain ATCC 51530 / DSM 4299 / JCM 9571 / NBRC 15438 / GSS1) protein is DNA ligase.